The chain runs to 430 residues: MATFKRLLAWISDLRIAIGLLLVIALASALGTAIPQGELRESYLEGYSDKPWLGFVNGSMILRLQLDHVYTSSWFLALLAWLGLALILCSWRRQWPALQAALQWIDYQEPRQLSKLAIAETISSPPKNESIDKLAAHLHQQGWQVQQQPGRLAARRGIIGRAGPMLVHLGLVLLMLGAVWGSLGGNRLEQFLAPGRSLDLLNRDGNSHLKLTLTNFGIERDPAGRPEQFRSQLELLEPGQDTAKLHEVSVNHPLRFHGLTVYQADWSLAAITLQLGRSPQLQLPLRTFPELGEQVWGLVLPTNPDGSEPVLLSLTSEAGPVQVFDATGERLASLRPAGPTAEVKGIPIRIVDVLPASGLLLKRDPGVPLVYIGFLITLVGGGLSMIATRQLWAVGDPENECLHVGGLCNRNLTGFANELPSLLAAAVPQQ.

The next 3 helical transmembrane spans lie at 14–34, 72–92, and 162–182; these read LRIAIGLLLVIALASALGTAI, SSWFLALLAWLGLALILCSWR, and AGPMLVHLGLVLLMLGAVWGS.

It belongs to the Ccs1/CcsB family. As to quaternary structure, may interact with CcsA.

The protein resides in the cellular thylakoid membrane. Functionally, required during biogenesis of c-type cytochromes (cytochrome c6 and cytochrome f) at the step of heme attachment. In Prochlorococcus marinus (strain MIT 9313), this protein is Cytochrome c biogenesis protein CcsB.